A 146-amino-acid chain; its full sequence is Anti-sigma F factor (146 aa).

Belongs to the anti-sigma-factor family.

It carries out the reaction L-seryl-[protein] + ATP = O-phospho-L-seryl-[protein] + ADP + H(+). It catalyses the reaction L-threonyl-[protein] + ATP = O-phospho-L-threonyl-[protein] + ADP + H(+). In terms of biological role, binds to sigma F and blocks its ability to form an RNA polymerase holoenzyme (E-sigma F). Phosphorylates SpoIIAA on a serine residue. This phosphorylation may enable SpoIIAA to act as an anti-anti-sigma factor that counteracts SpoIIAB and thus releases sigma F from inhibition. The polypeptide is Anti-sigma F factor (Geobacillus sp. (strain WCH70)).